We begin with the raw amino-acid sequence, 392 residues long: 26S proteasome regulatory subunit 8 homolog (392 aa).

An ATP-binding site is contributed by 176-183 (GPPGTGKT).

It belongs to the AAA ATPase family. As to quaternary structure, the 26S proteasome consists of a 20S proteasome core and two 19S regulatory subunits. The 20S proteasome core is composed of 28 subunits that are arranged in four stacked rings, resulting in a barrel-shaped structure. The two end rings are each formed by seven alpha subunits, and the two central rings are each formed by seven beta subunits. The catalytic chamber with the active sites is on the inside of the barrel.

It localises to the cytoplasm. The protein localises to the nucleus. Its function is as follows. Acts as a regulatory subunit of the 26S proteasome which degrades poly-ubiquitinated proteins in the cytoplasm and in the nucleus. It is essential for the regulated turnover of proteins and for the removal of misfolded proteins. The proteasome is a multicatalytic proteinase complex that is characterized by its ability to cleave peptides with Arg, Phe, Tyr, Leu, and Glu adjacent to the leaving group at neutral or slightly basic pH. The chain is 26S proteasome regulatory subunit 8 homolog (RPT6) from Encephalitozoon cuniculi (strain GB-M1) (Microsporidian parasite).